The following is a 368-amino-acid chain: DNA replication and repair protein RecF (368 aa).

Position 30 to 37 (30 to 37) interacts with ATP; that stretch reads GNNAQGKT.

The protein belongs to the RecF family.

Its subcellular location is the cytoplasm. Its function is as follows. The RecF protein is involved in DNA metabolism; it is required for DNA replication and normal SOS inducibility. RecF binds preferentially to single-stranded, linear DNA. It also seems to bind ATP. This is DNA replication and repair protein RecF from Streptococcus pyogenes serotype M6 (strain ATCC BAA-946 / MGAS10394).